A 494-amino-acid chain; its full sequence is UPF0371 protein SSA_0208 (494 aa).

The protein belongs to the UPF0371 family.

The sequence is that of UPF0371 protein SSA_0208 from Streptococcus sanguinis (strain SK36).